A 179-amino-acid chain; its full sequence is Protein HoxT (179 aa).

The protein is Protein HoxT (hoxT) of Cupriavidus necator (strain ATCC 17699 / DSM 428 / KCTC 22496 / NCIMB 10442 / H16 / Stanier 337) (Ralstonia eutropha).